The sequence spans 345 residues: Dihydroorotate dehydrogenase (quinone) (345 aa).

Residues 65-69 and threonine 89 each bind FMN; that span reads AGLDK. Lysine 69 provides a ligand contact to substrate. 114–118 lines the substrate pocket; sequence NRMGF. The FMN site is built by asparagine 142 and asparagine 175. Residue asparagine 175 participates in substrate binding. The Nucleophile role is filled by serine 178. Residue asparagine 180 participates in substrate binding. Positions 220 and 248 each coordinate FMN. Substrate is bound at residue 249-250; it reads NT. FMN contacts are provided by residues glycine 271, glycine 300, and 321–322; that span reads YT.

The protein belongs to the dihydroorotate dehydrogenase family. Type 2 subfamily. In terms of assembly, monomer. The cofactor is FMN.

It localises to the cell membrane. It catalyses the reaction (S)-dihydroorotate + a quinone = orotate + a quinol. It functions in the pathway pyrimidine metabolism; UMP biosynthesis via de novo pathway; orotate from (S)-dihydroorotate (quinone route): step 1/1. Functionally, catalyzes the conversion of dihydroorotate to orotate with quinone as electron acceptor. The polypeptide is Dihydroorotate dehydrogenase (quinone) (Burkholderia mallei (strain NCTC 10247)).